The primary structure comprises 914 residues: Trafficking kinesin-binding protein 2 (914 aa).

Residues 1-21 are compositionally biased toward polar residues; it reads MSQSQNAIFTSPTGEENLMNS. The segment at 1–30 is disordered; sequence MSQSQNAIFTSPTGEENLMNSNHRDSESIT. The 306-residue stretch at 48–353 folds into the HAP1 N-terminal domain; the sequence is EEQLPQYRLK…QEEIKELRSR (306 aa). Residues 134–354 adopt a coiled-coil conformation; the sequence is QALLKRNHVL…EEIKELRSRS (221 aa). The interval 359–509 is interaction with HGS; that stretch reads HLYFSQSYGA…KQFFAEEWQR (151 aa). Serine 420 is modified (phosphoserine). Disordered regions lie at residues 447–482 and 765–787; these read QQTE…DSDL and QPLP…SPCP. Polar residues predominate over residues 454-471; the sequence is LLNQGSSSEEVAGSSQKM. A compositionally biased stretch (pro residues) spans 775–787; it reads STPPNSPSHSPCP.

It belongs to the milton family. Interacts with GABA-A receptor and O-GlcNAc transferase. Interacts with HGS. Interacts with RHOT1/Miro-1 and RHOT2/Miro-2. O-glycosylated. Widely expressed, with highest expression in heart.

It is found in the cytoplasm. The protein localises to the early endosome. It localises to the mitochondrion. Functionally, may regulate endosome-to-lysosome trafficking of membrane cargo, including EGFR. This chain is Trafficking kinesin-binding protein 2 (TRAK2), found in Homo sapiens (Human).